The primary structure comprises 400 residues: S-adenosylmethionine decarboxylase proenzyme (400 aa).

Catalysis depends on residues Glu-18 and Glu-21. Catalysis depends on Ser-78, which acts as the Schiff-base intermediate with substrate; via pyruvic acid. Pyruvic acid (Ser); by autocatalysis is present on Ser-78. The active-site Proton donor; for catalytic activity is Cys-92. Residues Ser-243 and His-256 each act as proton acceptor; for processing activity in the active site.

This sequence belongs to the eukaryotic AdoMetDC family. The cofactor is pyruvate. Is synthesized initially as an inactive proenzyme. Formation of the active enzyme involves a self-maturation process in which the active site pyruvoyl group is generated from an internal serine residue via an autocatalytic post-translational modification. Two non-identical subunits are generated from the proenzyme in this reaction, and the pyruvate is formed at the N-terminus of the alpha chain, which is derived from the carboxyl end of the proenzyme. The post-translation cleavage follows an unusual pathway, termed non-hydrolytic serinolysis, in which the side chain hydroxyl group of the serine supplies its oxygen atom to form the C-terminus of the beta chain, while the remainder of the serine residue undergoes an oxidative deamination to produce ammonia and the pyruvoyl group blocking the N-terminus of the alpha chain.

The enzyme catalyses S-adenosyl-L-methionine + H(+) = S-adenosyl 3-(methylsulfanyl)propylamine + CO2. Its pathway is amine and polyamine biosynthesis; S-adenosylmethioninamine biosynthesis; S-adenosylmethioninamine from S-adenosyl-L-methionine: step 1/1. The polypeptide is S-adenosylmethionine decarboxylase proenzyme (SAMDC) (Zea mays (Maize)).